We begin with the raw amino-acid sequence, 196 residues long: CASP-like protein 2U1 (196 aa).

Over 1–11 the chain is Cytoplasmic; the sequence is MAPMECVRRRN. The chain crosses the membrane as a helical span at residues 12–32; sequence VGELVLRCAATLVCMLSLMLL. Residues 33 to 58 are Extracellular-facing; sequence VRDQQIAVQEVGVTSVTTQLRYSSST. Residues 59 to 79 traverse the membrane as a helical segment; that stretch reads GLVYLVYANGLVALYCFVVVL. The Cytoplasmic segment spans residues 80–95; the sequence is TSSFNGGSVMRRNKSG. Residues 96–116 traverse the membrane as a helical segment; it reads AWALFVLDQVLACILLSAASA. The Extracellular portion of the chain corresponds to 117 to 148; that stretch reads ASEIAFLVEKGAKKTIWDSKCIVYGHFCRMLE. The chain crosses the membrane as a helical span at residues 149–169; that stretch reads VSIATSFIAVIMLGSICVLSA. The Cytoplasmic portion of the chain corresponds to 170–196; it reads KQLFQQYTHYARIVNMVKLKSTPNSLL.

It belongs to the Casparian strip membrane proteins (CASP) family. As to quaternary structure, homodimer and heterodimers.

The protein localises to the cell membrane. This chain is CASP-like protein 2U1, found in Pteridium aquilinum subsp. aquilinum (Bracken fern).